Reading from the N-terminus, the 641-residue chain is MATAAGMGIGAACLVAPQVRPGRRLRLQRVRRRCVAELSRDGGSAQRPLAPAPLVKQPVLPTFLVPTSTPPAPTQSPAPAPTPPPLPDSGVGEIEPDLEGLTEDSIDKTIFVASEQESEIMDVKEQAQAKVTRSVVFVTGEASPYAKSGGLGDVCGSLPIALALRGHRVMVVMPRYMNGALNKNFANAFYTEKHIKIPCFGGEHEVTFFHEYRDSVDWVFVDHPSYHRPGNLYGDNFGAFGDNQFRYTLLCYAACEAPLILELGGYIYGQKCMFVVNDWHASLVPVLLAAKYRPYGVYRDARSVLVIHNLAHQGVEPASTYPDLGLPPEWYGALEWVFPEWARRHALDKGEAVNFLKGAVVTADRIVTVSQGYSWEVTTAEGGQGLNELLSSRKSVLNGIVNGIDINDWNPSTDKFLPYHYSVDDLSGKAKCKAELQKELGLPIRPDVPLIGFIGRLDYQKGIDLIKLAIPDLMRDNIQFVMLGSGDPGFEGWMRSTESGYRDKFRGWVGFSVPVSHRITAGCDILLMPSRFEPCGLNQLYAMQYGTVPVVHGTGGLRDTVENFNPFAEKGEQGTGWAFSPLTIEKMLWALRMAISTYREHKSSWEGLMKRGMSSDFTWDHAASQYEQIFEWAFMDQPYVM.

A chloroplast-targeting transit peptide spans 1 to 113 (MATAAGMGIG…DSIDKTIFVA (113 aa)). The disordered stretch occupies residues 62–96 (TFLVPTSTPPAPTQSPAPAPTPPPLPDSGVGEIEP). Over residues 68–87 (STPPAPTQSPAPAPTPPPLP) the composition is skewed to pro residues. Residue K147 participates in ADP-alpha-D-glucose binding.

The protein belongs to the glycosyltransferase 1 family. Bacterial/plant glycogen synthase subfamily. As to expression, leaves and immature seeds.

Its subcellular location is the plastid. It is found in the chloroplast. The protein resides in the amyloplast. The catalysed reaction is [(1-&gt;4)-alpha-D-glucosyl](n) + ADP-alpha-D-glucose = [(1-&gt;4)-alpha-D-glucosyl](n+1) + ADP + H(+). It functions in the pathway glycan biosynthesis; starch biosynthesis. In terms of biological role, involved in starch synthesis in endosperm amyloplasts. Plays a role in the elongation of amylopectin chains. Synthesizes preferentially amylopectin chains with a degree of polymerization (DP) of 7 to 11 by elongating chains with a DP of 4 to 7. Generates distincly chains with a DP of 8 to 12 chains from short chains with a DP of 6 to 7. In Oryza sativa subsp. japonica (Rice), this protein is Soluble starch synthase 1, chloroplastic/amyloplastic.